We begin with the raw amino-acid sequence, 182 residues long: ATP synthase subunit b, chloroplastic (182 aa).

Residues 29–47 form a helical membrane-spanning segment; that stretch reads IINLALLIVLVINVAKDVL.

This sequence belongs to the ATPase B chain family. In terms of assembly, F-type ATPases have 2 components, F(1) - the catalytic core - and F(0) - the membrane proton channel. F(1) has five subunits: alpha(3), beta(3), gamma(1), delta(1), epsilon(1). F(0) has four main subunits: a(1), b(1), b'(1) and c(10-14). The alpha and beta chains form an alternating ring which encloses part of the gamma chain. F(1) is attached to F(0) by a central stalk formed by the gamma and epsilon chains, while a peripheral stalk is formed by the delta, b and b' chains.

The protein localises to the plastid. Its subcellular location is the chloroplast thylakoid membrane. F(1)F(0) ATP synthase produces ATP from ADP in the presence of a proton or sodium gradient. F-type ATPases consist of two structural domains, F(1) containing the extramembraneous catalytic core and F(0) containing the membrane proton channel, linked together by a central stalk and a peripheral stalk. During catalysis, ATP synthesis in the catalytic domain of F(1) is coupled via a rotary mechanism of the central stalk subunits to proton translocation. In terms of biological role, component of the F(0) channel, it forms part of the peripheral stalk, linking F(1) to F(0). This chain is ATP synthase subunit b, chloroplastic, found in Heterosigma akashiwo (strain NIES-293 / 8280G21-1).